The sequence spans 600 residues: Proline--tRNA ligase (600 aa).

It belongs to the class-II aminoacyl-tRNA synthetase family. ProS type 1 subfamily. Homodimer.

It is found in the cytoplasm. The enzyme catalyses tRNA(Pro) + L-proline + ATP = L-prolyl-tRNA(Pro) + AMP + diphosphate. Catalyzes the attachment of proline to tRNA(Pro) in a two-step reaction: proline is first activated by ATP to form Pro-AMP and then transferred to the acceptor end of tRNA(Pro). As ProRS can inadvertently accommodate and process non-cognate amino acids such as alanine and cysteine, to avoid such errors it has two additional distinct editing activities against alanine. One activity is designated as 'pretransfer' editing and involves the tRNA(Pro)-independent hydrolysis of activated Ala-AMP. The other activity is designated 'posttransfer' editing and involves deacylation of mischarged Ala-tRNA(Pro). The misacylated Cys-tRNA(Pro) is not edited by ProRS. This is Proline--tRNA ligase from Prochlorococcus marinus (strain MIT 9312).